The chain runs to 338 residues: Porphobilinogen deaminase (338 aa).

Position 265 is an S-(dipyrrolylmethanemethyl)cysteine (Cys-265).

Belongs to the HMBS family. Requires dipyrromethane as cofactor.

The catalysed reaction is 4 porphobilinogen + H2O = hydroxymethylbilane + 4 NH4(+). The protein operates within porphyrin-containing compound metabolism; protoporphyrin-IX biosynthesis; coproporphyrinogen-III from 5-aminolevulinate: step 2/4. Tetrapolymerization of the monopyrrole PBG into the hydroxymethylbilane pre-uroporphyrinogen in several discrete steps. The protein is Porphobilinogen deaminase (HEM3) of Yarrowia lipolytica (strain CLIB 122 / E 150) (Yeast).